Here is a 388-residue protein sequence, read N- to C-terminus: MNQHLNGIPAHGGHLINRIATPAERQEFIEKAESLPKIQLDKRALSDLEMIAIGGFSPLNGFMDKDDYESVVVDMRLKNGLPWSIPVTLSVSEEVADSIKEGSWVGLSSPEGEFAGVLELTQKFHYNKAHEAINVYSTQEIKHPGVKVLYDAGPVNLAGPVWLLERHPHPLFPKYQIDPAESRKLFQEKNWKTIVGFQTRNPIHRAHEYIQKCALEVVDGLFLHPLVGATKSDDIPADVRMRCYEIMLEKYFPENRVMMAINPSAMRYAGPREAIFHALVRKNYGCTHFIVGRDHAGVGDYYGTYDAQYIFDEFEPRELDIVPMKFEHAFYCTRTQGMATSKTSPSTGEERIHLSGTKVREMLRRGELPPPEFSRPEVAAELAKAMKI.

This sequence belongs to the sulfate adenylyltransferase family.

It carries out the reaction sulfate + ATP + H(+) = adenosine 5'-phosphosulfate + diphosphate. The protein operates within sulfur metabolism; hydrogen sulfide biosynthesis; sulfite from sulfate: step 1/3. The sequence is that of Sulfate adenylyltransferase from Trichodesmium erythraeum (strain IMS101).